Here is a 333-residue protein sequence, read N- to C-terminus: Fe(3+)-citrate import system permease protein YfmE (333 aa).

8 helical membrane-spanning segments follow: residues 12–32, 65–85, 95–115, 120–140, 194–214, 238–258, 279–299, and 306–326; these read LLAI…SIGI, IILA…LQGV, VVGI…IFPE, VLPF…LMIA, EVKL…ILIP, FILI…VGSI, YLLP…DTLG, and VEIP…LYLL.

It belongs to the binding-protein-dependent transport system permease family. FecCD subfamily. In terms of assembly, the complex is composed of one ATP-binding protein (YfmF), two transmembrane proteins (YfmD and YfmE) and a solute-binding protein (YfmC).

The protein localises to the cell membrane. Its function is as follows. Part of the ABC transporter complex YfmCDEF involved in citrate-dependent Fe(3+) import. Involved in the translocation of the substrate across the membrane. The polypeptide is Fe(3+)-citrate import system permease protein YfmE (yfmE) (Bacillus subtilis (strain 168)).